Consider the following 429-residue polypeptide: Serine--tRNA ligase (429 aa).

An L-serine-binding site is contributed by 236 to 238; that stretch reads TGE. 267–269 is an ATP binding site; sequence RSE. Glu290 contacts L-serine. 354–357 lines the ATP pocket; the sequence is EISS. Ser390 is a binding site for L-serine.

This sequence belongs to the class-II aminoacyl-tRNA synthetase family. Type-1 seryl-tRNA synthetase subfamily. As to quaternary structure, homodimer. The tRNA molecule binds across the dimer.

The protein resides in the cytoplasm. The enzyme catalyses tRNA(Ser) + L-serine + ATP = L-seryl-tRNA(Ser) + AMP + diphosphate + H(+). It catalyses the reaction tRNA(Sec) + L-serine + ATP = L-seryl-tRNA(Sec) + AMP + diphosphate + H(+). It participates in aminoacyl-tRNA biosynthesis; selenocysteinyl-tRNA(Sec) biosynthesis; L-seryl-tRNA(Sec) from L-serine and tRNA(Sec): step 1/1. Catalyzes the attachment of serine to tRNA(Ser). Is also able to aminoacylate tRNA(Sec) with serine, to form the misacylated tRNA L-seryl-tRNA(Sec), which will be further converted into selenocysteinyl-tRNA(Sec). The sequence is that of Serine--tRNA ligase from Vesicomyosocius okutanii subsp. Calyptogena okutanii (strain HA).